We begin with the raw amino-acid sequence, 341 residues long: Anthranilate phosphoribosyltransferase (341 aa).

Residues Gly79, 82–83, Thr87, 89–92, 107–115, and Ser119 each bind 5-phospho-alpha-D-ribose 1-diphosphate; these read GD, NIST, and KHGNRAATS. Gly79 contacts anthranilate. Ser91 contributes to the Mg(2+) binding site. Asn110 lines the anthranilate pocket. Residue Arg165 participates in anthranilate binding. Residues Asp224 and Glu225 each contribute to the Mg(2+) site.

It belongs to the anthranilate phosphoribosyltransferase family. Homodimer. Requires Mg(2+) as cofactor.

It catalyses the reaction N-(5-phospho-beta-D-ribosyl)anthranilate + diphosphate = 5-phospho-alpha-D-ribose 1-diphosphate + anthranilate. It functions in the pathway amino-acid biosynthesis; L-tryptophan biosynthesis; L-tryptophan from chorismate: step 2/5. Functionally, catalyzes the transfer of the phosphoribosyl group of 5-phosphorylribose-1-pyrophosphate (PRPP) to anthranilate to yield N-(5'-phosphoribosyl)-anthranilate (PRA). The sequence is that of Anthranilate phosphoribosyltransferase from Symbiobacterium thermophilum (strain DSM 24528 / JCM 14929 / IAM 14863 / T).